The chain runs to 2544 residues: MDTDSEWASEPIAIIGMSCKFSGGASNPDKLWDLMASGKTGWSEIPEERFNLKGVYHANHERTSTTHVKGGHFLDEDVAVFDAAFFNYSAEMAQVVDPQFRLQLESAYEALENAGLPLSRVLGSQTSVFAGVFAHDYQEGIIRDEDRLPRFNVVGTWSPMSSNRISHFFDFRGASMTLETGCSTTLVALHQAVQTLRNREADMSVVTGANVMLNPDTFKAIGSLGMLSPDGRSYSFDSRANGYGRGEGVATIIIKRLSDALAANDPIRAVIRETAVNQDGKTDTITTPSGAAQVDLMRECYSRAGLDPRGTQYFEAHGTGTPTGDPIEAQAMATIFSEGRDDKNHYLRIGSVKTNVGHTEAVSGLAAVIKGVLCLEKGLIPPTVNYEMPNPKLKLNEWRLKVVRTIEHWPDSLIDGPCRMSINNFGYGGTNAHVILESADPWTLTPDLDFELVNGKGLKGNGDASDDVSDAKVLILSARDERGCQQMVSDLKGYLEKHKPLDRKASKQLLQNLSYTLCERRTLFQWVATHQVRLDSGALDSVIQGLDSPCFKPTRRASESPRIGMVFTGQVFRRSIEEAETYLNALGADWSLLEELQRDKKTTKVHETKISIPICVALQIALVRLLESWGITASGVASHSSGEISAAFAVGALTHHQAIAIAYFRAIIVADGTQRAPGSAKGAMAAIGLGVGTVQPYLDRLTEGKAVVACVNSPQSVTISGDEDAIDEITDLCKQDGVFARRLKVQQAYHSHHMDPFADTYRERLRIEMDRSVVKGDKQKLKAVFSSAVTGGRITDIKEIASPDHWVGSLIRPVEFVDALTELVLGDPDDPTGRSVDVLLEVGPHTALGGPIREILSLSEFGGIELPYWGCLVRDEHAGDSMRSAAINLFREGQSLAMDKINFPVPAYDGEGPQVLTNLPSYPWNHTMRHWQESRVNRAIRERGQPPHELLGMPVAGNDPSASVWRRVLRVTETPWLRDHMVQGSIVYPGAGYICLAIEAVRQLTDQDKSVSGLRLRDINFLFALVIPDNADGVEIRTTLQSVPEREIGAQGWWRFEVSSVTLENRWTLHATGMVGIEESAVLETERRRRPLSIYTRQPNPQDLFANLRAHSVYHGPLFQNTNRIIQDGREPRSICDITIRHEASSDTDPEVAAQNSLLHPITLDAVFVAFYSALPSVGALQEEPKLPRSVRAMWISSNISHQIGHTLQCDTSLLNDDPQRGRADITVFDGKTDATVLKIQGVELAALGRGSSASTSTEVCSRVVWEPDLSFRNPLAFEQIKKHLASTNSDQEADVVRDLQRLCIAYASDALRELTPGDVAGLQEQPHLAKYYAFLRGLVNKTTEEPGKPQQSMESVDEKVVCRLGPLLPSILRGERSVEEVRSLMDEYNTNSRRQLSSLRQLSALLQTIAHKSPGARVLQIGSSTGALATRRILETLDTNLVASWHITEPSSELLDNARAQLADWADLLQFEQLDIEQSPFKKKFIPESYDVVVSLHALHAIKNPASALGNVRTLLKPGGTLLLVETTKNQVDVDFVFALRPGWLQDKNPLTSWDAVLQDGGFSGLDLEIYDSESDIHTNSVIMSTVPAKDQKADLSKVKDSFAVVSSIKTPPSSPIVDQLCQRIQALTGTATTHLVLEKTSGNTYKDKICVFIGELDRPILADLDAVQMEGLRAMVTQCSGLLWVTTGGTVEREAPERAVHQGFLRVLRNEYISRYFISLDLDPAHADAGAAGWSSGANPAVSAIVQALEEGFGHGSTRTGPAEFEYAERNGVLHIPRYYKDEKYNNMVTCPLAPSWSDHDERSIPLERLFQDRQLRLQVGIPGHLGTLAFAENEANHADLPPELMEITPRAHGACSRDVMAAMGQLKDQAMGFECAGIIARLGSEAYSKGYRVGDRVMALSAGASFASNVCVPWHGVIQMPKDMDFVSAASLPLAFTVAYFGLVRSASLTTGQSVLIHAAAGAFGQAAIMLAKHLGVTEIYATVGSPEKQDILEREYGIPSERIFSSRDASFAPAILAATKGRGVDLVLSSLSGPLLQESLSTVAPLGYLVNIGKADIERNSLMALESFSRGISFVSMDVPTLLQRRGPDVHRTLGEITSLVEQQVLKPVYPVTVYPMQDVQAAFRFVQTGDQMGKVVLSAGSDEQVYVVPRPKGLTTQSQLRPDASYLIVGGVGGIGRSVAHWLVAHGAQHLILLSRSAGNLDLDQNKNSDGAFFINELRHMGCRVKPVSCDVSLASSLTVALRACEDDGFPPVRGVIQGAMLLRDAIFEQMTLDDWRSGLSPKLYGTWNLHTEFSQPDSLDFFIMLSSVSGVAGIASQSNYAAGGSYEDAMARWRQSQGLPGVAIDLGPISDIGYVSTDPRVAERLRKDGEFAMLDEGIVLRALNAAILHPLGRSQIIIGLTSSPGPHWDPNGRSQLGRDARYATLRPHTKVSARQDGESTSASLATQLADTNDPQEGARLIGAAIAEKLADIFMTPIAEIDLSKPPAHYGVDSLIAVELRNMLALQAAADISIFNILQTASLAALAGLVAEKSRHFQA.

The Ketosynthase family 3 (KS3) domain occupies 9-438 (SEPIAIIGMS…GTNAHVILES (430 aa)). Catalysis depends on for beta-ketoacyl synthase activity residues cysteine 182, histidine 317, and histidine 358. Positions 566-876 (VFTGQVFRRS…PYWGCLVRDE (311 aa)) are malonyl-CoA:ACP transacylase (MAT) domain. An N-terminal hotdog fold region spans residues 948-1082 (HELLGMPVAG…GMVGIEESAV (135 aa)). Residues 948–1252 (HELLGMPVAG…VELAALGRGS (305 aa)) are dehydratase (DH) domain. The PKS/mFAS DH domain occupies 948-1254 (HELLGMPVAG…LAALGRGSSA (307 aa)). The active-site Proton acceptor; for dehydratase activity is the histidine 980. Residues 1095–1254 (YTRQPNPQDL…LAALGRGSSA (160 aa)) are C-terminal hotdog fold. The active-site Proton donor; for dehydratase activity is the aspartate 1165. The tract at residues 1398-1573 (SSLRQLSALL…FSGLDLEIYD (176 aa)) is methyltransferase (CMet) domain. Residues 1826-2142 (GHLGTLAFAE…TGDQMGKVVL (317 aa)) form an enoyl reductase (ER) domain region. A ketoreductase (KR) domain region spans residues 2169 to 2356 (ASYLIVGGVG…GVAIDLGPIS (188 aa)). The 78-residue stretch at 2462-2539 (EGARLIGAAI…ALAGLVAEKS (78 aa)) folds into the Carrier domain. Serine 2499 is subject to O-(pantetheine 4'-phosphoryl)serine.

Pantetheine 4'-phosphate is required as a cofactor.

It functions in the pathway secondary metabolite biosynthesis. Highly reducing polyketide synthase; part of the pkh gene cluster that mediates the biosynthesis of 2,4-dihydroxy-6-[(3E,5E,7E)-2-oxonona-3,5,7-trienyl]benzaldehyde. The highly reducing polyketide synthase pkhB first produces the (2E,4E,6E)-octa-2,4,6-trienyl strater unit for the non-reducing polyketide synthase pkhA. This octatrienoyl starter is then loaded onto the SAT domain of the NR-PKS pkhA to be condensed with 4 malonyl-CoA units to yield 2,4-dihydroxy-6-[(3E,5E,7E)-2-oxonona-3,5,7-trienyl]benzaldehyde. The polypeptide is Highly reducing polyketide synthase pkhB (Emericella nidulans (strain FGSC A4 / ATCC 38163 / CBS 112.46 / NRRL 194 / M139) (Aspergillus nidulans)).